Consider the following 473-residue polypeptide: Siroheme synthase (473 aa).

The tract at residues 1–203 (MTLFPIFADL…QQPGLAEQEL (203 aa)) is precorrin-2 dehydrogenase /sirohydrochlorin ferrochelatase. NAD(+)-binding positions include 22-23 (AV) and 43-44 (PR). Ser128 carries the phosphoserine modification. Positions 216–473 (GSVVLVGAGP…GLPGPQALAA (258 aa)) are uroporphyrinogen-III C-methyltransferase. Residue Pro225 coordinates S-adenosyl-L-methionine. The active-site Proton acceptor is Asp248. Lys270 functions as the Proton donor in the catalytic mechanism. S-adenosyl-L-methionine-binding positions include 302–304 (GGD), Ile307, 332–333 (TA), Met384, and Gly413.

It in the N-terminal section; belongs to the precorrin-2 dehydrogenase / sirohydrochlorin ferrochelatase family. This sequence in the C-terminal section; belongs to the precorrin methyltransferase family.

The catalysed reaction is uroporphyrinogen III + 2 S-adenosyl-L-methionine = precorrin-2 + 2 S-adenosyl-L-homocysteine + H(+). It catalyses the reaction precorrin-2 + NAD(+) = sirohydrochlorin + NADH + 2 H(+). The enzyme catalyses siroheme + 2 H(+) = sirohydrochlorin + Fe(2+). It functions in the pathway cofactor biosynthesis; adenosylcobalamin biosynthesis; precorrin-2 from uroporphyrinogen III: step 1/1. Its pathway is cofactor biosynthesis; adenosylcobalamin biosynthesis; sirohydrochlorin from precorrin-2: step 1/1. The protein operates within porphyrin-containing compound metabolism; siroheme biosynthesis; precorrin-2 from uroporphyrinogen III: step 1/1. It participates in porphyrin-containing compound metabolism; siroheme biosynthesis; siroheme from sirohydrochlorin: step 1/1. It functions in the pathway porphyrin-containing compound metabolism; siroheme biosynthesis; sirohydrochlorin from precorrin-2: step 1/1. Its function is as follows. Multifunctional enzyme that catalyzes the SAM-dependent methylations of uroporphyrinogen III at position C-2 and C-7 to form precorrin-2 via precorrin-1. Then it catalyzes the NAD-dependent ring dehydrogenation of precorrin-2 to yield sirohydrochlorin. Finally, it catalyzes the ferrochelation of sirohydrochlorin to yield siroheme. The polypeptide is Siroheme synthase (Bordetella pertussis (strain Tohama I / ATCC BAA-589 / NCTC 13251)).